Consider the following 757-residue polypeptide: E3 ubiquitin-protein ligase SMURF1 (757 aa).

Residues 1–120 enclose the C2 domain; it reads MSNPGTRRNG…TGYQRLDLCK (120 aa). Positions 193-237 are disordered; that stretch reads GNCRFVESPSQDQRLQAQRLRNPDVRGSLQTPQNRPHGHQSPELP. Serine 200 carries the phosphoserine modification. WW domains are found at residues 234-267 and 306-339; these read PELP…DPRI and GPLP…DPRL. Glycyl lysine isopeptide (Lys-Gly) (interchain with G-Cter in ubiquitin) cross-links involve residues lysine 381 and lysine 383. The region spanning 420–757 is the HECT domain; the sequence is RPKDLKKRLM…VEETCGFAVE (338 aa). Cysteine 725 serves as the catalytic Glycyl thioester intermediate.

As to quaternary structure, interacts with TRAF4. Interacts (via HECT domain) with FBXL15 (via LRR repeats). Interacts with SMAD7 and TGFBR1; SMAD7 recruits SMURF1 to TGFBR1 and regulates TGF-beta receptor degradation. Interacts with MAVS; the interaction is mediated by NDFIP1. Auto-ubiquitinated in presence of NDFIP1. Ubiquitinated by the SCF(FBXL15) complex at Lys-381 and Lys-383, leading to its degradation by the proteasome. Lys-383 is the primary ubiquitination site. Expressed in melanocytes.

The protein localises to the cytoplasm. The protein resides in the cell membrane. It carries out the reaction S-ubiquitinyl-[E2 ubiquitin-conjugating enzyme]-L-cysteine + [acceptor protein]-L-lysine = [E2 ubiquitin-conjugating enzyme]-L-cysteine + N(6)-ubiquitinyl-[acceptor protein]-L-lysine.. Its pathway is protein modification; protein ubiquitination. Functionally, E3 ubiquitin-protein ligase that acts as a negative regulator of BMP signaling pathway. Mediates ubiquitination and degradation of SMAD1 and SMAD5, 2 receptor-regulated SMADs specific for the BMP pathway. Promotes ubiquitination and subsequent proteasomal degradation of TRAF family members and RHOA. Promotes ubiquitination and subsequent proteasomal degradation of MAVS. Acts as an antagonist of TGF-beta signaling by ubiquitinating TGFBR1 and targeting it for degradation. Plays a role in dendrite formation by melanocytes. The sequence is that of E3 ubiquitin-protein ligase SMURF1 (SMURF1) from Homo sapiens (Human).